Consider the following 354-residue polypeptide: Zinc finger protein-like 1 homolog (354 aa).

Residues 1–41 (MGICKCKKRSEDFCFNHKKFICDSCVVADHSICYIKSYVSW) form a B box-type; degenerate zinc finger. Residues 52–103 (CGVCKGKFDVDDNDDSVRLLCYHLYHPECIDVYVAALPQNSSVESYPCPKCP) form an RING-type; atypical zinc finger. 2 disordered regions span residues 139–167 (KQNS…NGTH) and 187–225 (GIHH…PYGL). Residues 196–205 (NNSNNNNIIN) show a composition bias toward low complexity. A helical membrane pass occupies residues 287–307 (YLIMITVAIIVFLILISKMGS). A disordered region spans residues 326 to 354 (ININNDNNGGNGAINEETLNDQKIPNNGQ).

This sequence belongs to the ZFPL1 family.

It is found in the membrane. The polypeptide is Zinc finger protein-like 1 homolog (zfpl1) (Dictyostelium discoideum (Social amoeba)).